We begin with the raw amino-acid sequence, 116 residues long: Ribosome-binding factor A (116 aa).

Belongs to the RbfA family. In terms of assembly, monomer. Binds 30S ribosomal subunits, but not 50S ribosomal subunits or 70S ribosomes.

Its subcellular location is the cytoplasm. Functionally, one of several proteins that assist in the late maturation steps of the functional core of the 30S ribosomal subunit. Associates with free 30S ribosomal subunits (but not with 30S subunits that are part of 70S ribosomes or polysomes). Required for efficient processing of 16S rRNA. May interact with the 5'-terminal helix region of 16S rRNA. This is Ribosome-binding factor A from Streptococcus uberis (strain ATCC BAA-854 / 0140J).